A 189-amino-acid chain; its full sequence is Tumor protein p53-inducible protein 11 (189 aa).

The Cytoplasmic segment spans residues methionine 1 to arginine 63. Serine 14 bears the Phosphoserine mark. Residues valine 64–proline 84 traverse the membrane as a helical segment. The Extracellular segment spans residues aspartate 85–glycine 108. The helical transmembrane segment at alanine 109 to isoleucine 129 threads the bilayer. Residue arginine 130 is a topological domain, cytoplasmic. Residues tryptophan 131–leucine 151 traverse the membrane as a helical segment. The Extracellular segment spans residues alanine 152–glutamine 159. A helical membrane pass occupies residues glycine 160–tyrosine 180. The Cytoplasmic segment spans residues glutamine 181–valine 189.

The protein localises to the membrane. The protein is Tumor protein p53-inducible protein 11 (TP53I11) of Bos taurus (Bovine).